The primary structure comprises 512 residues: Tyrosine decarboxylase (512 aa).

The L-tyrosine site is built by Pro100, His205, and His320. Position 321 is an N6-(pyridoxal phosphate)lysine (Lys321). L-tyrosine is bound at residue Tyr350.

It belongs to the group II decarboxylase family. Homodimer. It depends on pyridoxal 5'-phosphate as a cofactor. As to expression, mainly expressed in roots, stems and capsule walls.

It carries out the reaction L-tyrosine + H(+) = tyramine + CO2. Its function is as follows. Tyrosine decarboxylase that converts tyrosine into tyramine, a precursor of isoquinoline alkaloids and various amides. The protein is Tyrosine decarboxylase of Papaver somniferum (Opium poppy).